Reading from the N-terminus, the 1066-residue chain is MTDQENNNNISSNPFAALFGSLADAKQFAAIHKEQLKQQSDELPASPDDSDNSVSESLDEFDYSVSEISRSFRTHQEMCEQLNINHMIQRIFLITLDNSDPNLKSGNGIPSRCVYLEEMAVELEDQDWLDMSNVEQAIFARLLLQDPGNHLISMTSSATLNLSADRDAGERHIFCYLYSCFQRAKEEITKVPENLLPFAVQCRNLTVSNTRTVLLTPEIYVDQNIHEQLVDLMLEAIQGAHFEDVTEFLEEVIEALLLDEEVRTFPEVMIPVFDILLGRIKDLELCQILLYAYLDILLYFTRQKDMAKVFLEYIQPKDPSNGQMYQKTLLGVILNISCLLKTPGVVENHGFFLNPSRSSPQEIKVQEANIHQFMAQFHEKIYQMLKNLLQLSPETKHGILFWLGNCLHANAGRTKIWANQMPEIFFQMYASDAFFLNLGAALLKLCQPFCKPRSSRLLTFNPTYCVLKDLNDEERKIKSVHMRGLDKETCLIPAVQEPVFPQSYNLVTENLALTEYTLYLGFHRLHDQMVKINQNLHRLQVAWRDAQQSSSPAADNLREQFERLMTIYLSTKTAMTEPQMLQNCLNLQVSMAVLLVQLAIGNEGSQPIELSFPLPDGYSSLAYVPEFFADNLGDFLIFLRRFAEDILETSADSLEHVLHFITIFTGSIERMKNPHLRAKLAEVLEAVMPHLDQTPSPLVSSVFHRKRVFCNFPYAPQLSEALIKVFVDIEFTGDPHQFEQKFNYRRPMYPILRYMWGTDSYRESIKDLADYASKNLEAMNPPLFLRFLNLLMNDAIFLLDEAIQYLSKIKIQQIEKDRGEWESLTPEARREKEAGLQMFGQLARFHNIMSNETIGTLSFLTSEIKSLFVHPFLAERIISMLNYFLQHLVGPKMGALKVKDFSEFDFKPQQLVSDICTIYLNLGDEENFCATVPKDGRSYSPTLFAQTVRVLKKINKPGNMIVAFSNLAERIKSLADLQQQEEETYADACDEFLDPIMSTLMSDPVVLPSSRVTVDGSTIARHLLSDQTDPFNRSPLTMDQIRPNTELKEKIQRWLAERKQQKEQLE.

The tract at residues 35-57 (QLKQQSDELPASPDDSDNSVSES) is disordered. The residue at position 386 (Lys386) is an N6-acetyllysine. The U-box domain occupies 987–1061 (DACDEFLDPI…QRWLAERKQQ (75 aa)).

It belongs to the ubiquitin conjugation factor E4 family.

Its subcellular location is the cytoplasm. The catalysed reaction is S-ubiquitinyl-[E2 ubiquitin-conjugating enzyme]-L-cysteine + [acceptor protein]-L-lysine = [E2 ubiquitin-conjugating enzyme]-L-cysteine + N(6)-ubiquitinyl-[acceptor protein]-L-lysine.. The protein operates within protein modification; protein ubiquitination. Functionally, ubiquitin-protein ligase that probably functions as an E3 ligase in conjunction with specific E1 and E2 ligases. May also function as an E4 ligase mediating the assembly of polyubiquitin chains on substrates ubiquitinated by another E3 ubiquitin ligase. Mediates 'Lys-48'-linked polyubiquitination of substrates. This is Ubiquitin conjugation factor E4 A from Rattus norvegicus (Rat).